A 534-amino-acid chain; its full sequence is ATP synthase subunit beta 2 (534 aa).

Over residues 1 to 10 (MADPQATNGT) the composition is skewed to polar residues. A disordered region spans residues 1 to 30 (MADPQATNGTGAACAERDASDVGDVSDVGD). 185 to 192 (GGAGVGKT) lines the ATP pocket. The segment covering 494 to 505 (AAAREADARREA) has biased composition (basic and acidic residues). Positions 494 to 534 (AAAREADARREAAAAASGAGPGTTSDPASGSAEPQGARHGR) are disordered.

It belongs to the ATPase alpha/beta chains family. F-type ATPases have 2 components, CF(1) - the catalytic core - and CF(0) - the membrane proton channel. CF(1) has five subunits: alpha(3), beta(3), gamma(1), delta(1), epsilon(1). CF(0) has three main subunits: a(1), b(2) and c(9-12). The alpha and beta chains form an alternating ring which encloses part of the gamma chain. CF(1) is attached to CF(0) by a central stalk formed by the gamma and epsilon chains, while a peripheral stalk is formed by the delta and b chains.

The protein resides in the cell inner membrane. The enzyme catalyses ATP + H2O + 4 H(+)(in) = ADP + phosphate + 5 H(+)(out). In terms of biological role, produces ATP from ADP in the presence of a proton gradient across the membrane. The catalytic sites are hosted primarily by the beta subunits. The chain is ATP synthase subunit beta 2 from Burkholderia pseudomallei (strain 668).